We begin with the raw amino-acid sequence, 395 residues long: Cytoplasmic tRNA 2-thiolation protein 1 (395 aa).

Over residues 297-309 (TVAYKNKNKNKKK) the composition is skewed to basic residues. Residues 297–335 (TVAYKNKNKNKKKSNSEQEEQEKQEQEVNPDGSISLNRN) are disordered.

Belongs to the TtcA family. CTU1/NCS6/ATPBD3 subfamily.

Its subcellular location is the cytoplasm. It functions in the pathway tRNA modification; 5-methoxycarbonylmethyl-2-thiouridine-tRNA biosynthesis. In terms of biological role, plays a central role in 2-thiolation of mcm(5)S(2)U at tRNA wobble positions of tRNA(Lys), tRNA(Glu) and tRNA(Gln). Directly binds tRNAs and probably acts by catalyzing adenylation of tRNAs, an intermediate required for 2-thiolation. It is unclear whether it acts as a sulfurtransferase that transfers sulfur from thiocarboxylated URM1 onto the uridine of tRNAs at wobble position. Prior mcm(5) tRNA modification by the elongator complex is required for 2-thiolation. May also be involved in protein urmylation. This chain is Cytoplasmic tRNA 2-thiolation protein 1, found in Candida albicans (strain SC5314 / ATCC MYA-2876) (Yeast).